A 554-amino-acid polypeptide reads, in one-letter code: 3-(3-hydroxy-phenyl)propionate/3-hydroxycinnamic acid hydroxylase (554 aa).

FAD is bound by residues 17–46 and 285–295; these read QVAI…VVEK and FRIDRVLLAGD.

This sequence belongs to the PheA/TfdB FAD monooxygenase family. Requires FAD as cofactor.

The catalysed reaction is 3-(3-hydroxyphenyl)propanoate + NADH + O2 + H(+) = 3-(2,3-dihydroxyphenyl)propanoate + NAD(+) + H2O. It carries out the reaction (2E)-3-(3-hydroxyphenyl)prop-2-enoate + NADH + O2 + H(+) = (2E)-3-(2,3-dihydroxyphenyl)prop-2-enoate + NAD(+) + H2O. It participates in aromatic compound metabolism; 3-phenylpropanoate degradation. Its function is as follows. Catalyzes the insertion of one atom of molecular oxygen into position 2 of the phenyl ring of 3-(3-hydroxyphenyl)propionate (3-HPP) and hydroxycinnamic acid (3HCI). The sequence is that of 3-(3-hydroxy-phenyl)propionate/3-hydroxycinnamic acid hydroxylase from Escherichia coli (strain 55989 / EAEC).